Consider the following 191-residue polypeptide: Orotate phosphoribosyltransferase (191 aa).

Residue 114 to 122 participates in 5-phospho-alpha-D-ribose 1-diphosphate binding; it reads EDVVTTGKS. Positions 118 and 146 each coordinate orotate.

This sequence belongs to the purine/pyrimidine phosphoribosyltransferase family. PyrE subfamily. Homodimer. The cofactor is Mg(2+).

The enzyme catalyses orotidine 5'-phosphate + diphosphate = orotate + 5-phospho-alpha-D-ribose 1-diphosphate. Its pathway is pyrimidine metabolism; UMP biosynthesis via de novo pathway; UMP from orotate: step 1/2. In terms of biological role, catalyzes the transfer of a ribosyl phosphate group from 5-phosphoribose 1-diphosphate to orotate, leading to the formation of orotidine monophosphate (OMP). In Clostridium botulinum (strain Langeland / NCTC 10281 / Type F), this protein is Orotate phosphoribosyltransferase.